The primary structure comprises 379 residues: MAKKTKKTEEITKKFGDERWKALDDALKNIGKDFGKGAVMRLGERAEEKVQVMSSGSLALDIALGAGGYPKGRIIEIYGPESSGKTTVALHAVAQTQKEGGIAAFIDAEHALDPAYAAALGVNIDELLLSQPDSGEQGLEIACKLIDSGAVDLVVVDSVAALVPRAEIDGDIGDSHVGLQARMMSQAMRKLSASINKTKTIAIFINQLREKVGIMFGNPETTPGGRALKFYAYVALDVRGNTQIKGTGDKKDQNVGKETKIKVVKNKVAPPFKEAFVEIMYGEGISQTGELVKIASDIGIIQKAGAWFSYNGEKIGQGSENAKKYLADHPEIFAEIDHKVRVHYGLIELDEDDVVEDTQVEDTSDELILDLDSTIEIEE.

79 to 86 (GPESSGKT) lines the ATP pocket.

This sequence belongs to the RecA family.

Its subcellular location is the cytoplasm. Can catalyze the hydrolysis of ATP in the presence of single-stranded DNA, the ATP-dependent uptake of single-stranded DNA by duplex DNA, and the ATP-dependent hybridization of homologous single-stranded DNAs. It interacts with LexA causing its activation and leading to its autocatalytic cleavage. The chain is Protein RecA from Streptococcus thermophilus.